The following is a 325-amino-acid chain: Phosphatidylserine decarboxylase proenzyme (325 aa).

Active-site charge relay system; for autoendoproteolytic cleavage activity residues include Asp90, His147, and Ser253. Ser253 serves as the catalytic Schiff-base intermediate with substrate; via pyruvic acid; for decarboxylase activity. Position 253 is a pyruvic acid (Ser); by autocatalysis (Ser253). Positions 281-325 (MASKMSSQKAITPEQTTETPVQASNEFDDNAGETKKDTPSEGADS) are disordered. The segment covering 284 to 305 (KMSSQKAITPEQTTETPVQASN) has biased composition (polar residues).

Belongs to the phosphatidylserine decarboxylase family. PSD-B subfamily. Prokaryotic type I sub-subfamily. Heterodimer of a large membrane-associated beta subunit and a small pyruvoyl-containing alpha subunit. Pyruvate is required as a cofactor. In terms of processing, is synthesized initially as an inactive proenzyme. Formation of the active enzyme involves a self-maturation process in which the active site pyruvoyl group is generated from an internal serine residue via an autocatalytic post-translational modification. Two non-identical subunits are generated from the proenzyme in this reaction, and the pyruvate is formed at the N-terminus of the alpha chain, which is derived from the carboxyl end of the proenzyme. The autoendoproteolytic cleavage occurs by a canonical serine protease mechanism, in which the side chain hydroxyl group of the serine supplies its oxygen atom to form the C-terminus of the beta chain, while the remainder of the serine residue undergoes an oxidative deamination to produce ammonia and the pyruvoyl prosthetic group on the alpha chain. During this reaction, the Ser that is part of the protease active site of the proenzyme becomes the pyruvoyl prosthetic group, which constitutes an essential element of the active site of the mature decarboxylase.

It is found in the cell membrane. The catalysed reaction is a 1,2-diacyl-sn-glycero-3-phospho-L-serine + H(+) = a 1,2-diacyl-sn-glycero-3-phosphoethanolamine + CO2. Its pathway is phospholipid metabolism; phosphatidylethanolamine biosynthesis; phosphatidylethanolamine from CDP-diacylglycerol: step 2/2. Catalyzes the formation of phosphatidylethanolamine (PtdEtn) from phosphatidylserine (PtdSer). The sequence is that of Phosphatidylserine decarboxylase proenzyme from Alteromonas mediterranea (strain DSM 17117 / CIP 110805 / LMG 28347 / Deep ecotype).